A 199-amino-acid chain; its full sequence is MTTLTAQQIACVYAWLAQLFSRELDDEQLTQIASAQMAEWFSLLKSEPPLTAAVNGLENSIATLTVRDDARLELAADFCGLFLMTDKQAALPYASAYKQDEQEIKRLLVEAGMETSGNFNEPADHLAIYLELLSHLHFSLGEGTVPARRIDGLRQKTLTALRQWLPEFVARCHQYDRFGFYAALSQLLQVLVECDNQKG.

The protein belongs to the TorD/DmsD family. TorD subfamily.

The protein localises to the cytoplasm. Its function is as follows. Involved in the biogenesis of TorA. Acts on TorA before the insertion of the molybdenum cofactor and, as a result, probably favors a conformation of the apoenzyme that is competent for acquiring the cofactor. In Escherichia coli O81 (strain ED1a), this protein is Chaperone protein TorD.